Consider the following 662-residue polypeptide: Protein associated with UVRAG as autophagy enhancer (662 aa).

Disordered stretches follow at residues 1 to 34 (MVSQ…RLLN) and 58 to 131 (DVQQ…SLSS). Residues 58 to 71 (DVQQQPQDLQSQVP) are compositionally biased toward low complexity. Over residues 100-113 (AETTLSEDTTDSVG) the composition is skewed to polar residues. A compositionally biased stretch (low complexity) spans 114-131 (SASPHGSSEKSSSFSLSS). Phosphoserine; by MTOR is present on S157. Residues 196 to 235 (EVFVLPVDVEKENAHFYVADMIISAMEKMKCNILSQQQTE) form an interaction with UVRAG region. Residues K483, K523, K533, K573, and K633 each carry the N6-acetyllysine modification.

In terms of assembly, interacts with UVRAG; the interaction is direct and promotes association with the PI3K/PI3KC3 and HOPS complexes. Interacts with STX17. Phosphorylated by MTOR at Ser-157 under nutrient-rich conditions. Phosphorylation prevents acetylation by KAT5/TIP60 and impairs RUBCNL/PACER function and autophagosome maturation. Under autophagy induction, Phosphorylation by MTOR is repressed, enabling acetylation by KAT5/TIP60. In terms of processing, acetylated by KAT5/TIP60 under autophagy induction, promoting autophagosome maturation and lipid metabolism. Acetylation is prevented by phosphorylation by MTOR. Lys-483 and Lys-573 constitute the key sites for tuning function in autophagy. In terms of tissue distribution, expressed weakly in cervical carcinoma cell lines.

The protein localises to the cytoplasmic vesicle. It is found in the autophagosome membrane. Functionally, regulator of autophagy that promotes autophagosome maturation by facilitating the biogenesis of phosphatidylinositol 3-phosphate (PtdIns(3)P) in late steps of autophagy. Acts by antagonizing RUBCN, thereby stimulating phosphatidylinositol 3-kinase activity of the PI3K/PI3KC3 complex. Following anchorage to the autophagosomal SNARE STX17, promotes the recruitment of PI3K/PI3KC3 and HOPS complexes to the autophagosome to regulate the fusion specificity of autophagosomes with late endosomes/lysosomes. Binds phosphoinositides phosphatidylinositol 3-phosphate (PtdIns(3)P), 4-phosphate (PtdIns(4)P) and 5-phosphate (PtdIns(5)P). In addition to its role in autophagy, acts as a regulator of lipid and glycogen homeostasis. May act as a tumor suppressor. This chain is Protein associated with UVRAG as autophagy enhancer, found in Homo sapiens (Human).